A 150-amino-acid polypeptide reads, in one-letter code: Large ribosomal subunit protein uL15 (150 aa).

This sequence belongs to the universal ribosomal protein uL15 family. In terms of assembly, part of the 50S ribosomal subunit.

Binds to the 23S rRNA. This Rickettsia prowazekii (strain Madrid E) protein is Large ribosomal subunit protein uL15.